A 28-amino-acid polypeptide reads, in one-letter code: Unknown protein from spot 154 of 2D-PAGE of etiolated coleoptile (28 aa).

The chain is Unknown protein from spot 154 of 2D-PAGE of etiolated coleoptile from Zea mays (Maize).